Reading from the N-terminus, the 475-residue chain is MNFSDIYHSDEEYFRKLKDLKAVHEETMSKLEKMYQDKLNIKDIQAGFIRDGISDSSSSSASEKSCSHPALSVTSLSEPDLDGSSSLSTTTDEGLPDLEEKTPGESSAMVHAQELINNMWNDFSVEDYIQYDSDSRTAKKKRKKAKSLTPKITVPVPFEMTVREQNRREKALSARSDLETKLLKRDEDDAECKKKFRANPVPSCVLLPLYEDLVKQSEERRKKARERNRAALLASLKPFKFIAREEQKQAVREKKLRDLFRAKRKTNQFKAKPVPRFIYRPAASDKPKEEELYGDSRMLPKVRDLLQNSPWPSRSACRRFRDPRSPAKPRGKHRRRCLRRDGDLEKWKEPFSEYSFLKCPMLCEECCLHESPCDSDKRQKLLADIRADEEILRETRRPGRSPRRKSPGRSSNPKPRPHECSPPMPTASSRGREQAIRRSEKARMREYWQELEEQEEKLQKRPMLFERVTQVVFIG.

Positions 53 to 107 are disordered; the sequence is ISDSSSSSASEKSCSHPALSVTSLSEPDLDGSSSLSTTTDEGLPDLEEKTPGESS. Low complexity-rich tracts occupy residues 54-64 and 82-93; these read SDSSSSSASEK and DGSSSLSTTTDE. The stretch at 162–234 forms a coiled coil; sequence VREQNRREKA…RERNRAALLA (73 aa). Residues 255 to 434 are required for interaction with CFAP418; the sequence is KLRDLFRAKR…PTASSRGREQ (180 aa). The interval 314–337 is disordered; sequence RSACRRFRDPRSPAKPRGKHRRRC. Residues 327 to 337 show a composition bias toward basic residues; the sequence is AKPRGKHRRRC. A Glycyl lysine isopeptide (Lys-Gly) (interchain with G-Cter in SUMO2) cross-link involves residue Lys377. Positions 389–441 are disordered; that stretch reads EEILRETRRPGRSPRRKSPGRSSNPKPRPHECSPPMPTASSRGREQAIRRSEK. Residues 398–407 show a composition bias toward basic residues; the sequence is PGRSPRRKSP. The span at 430–441 shows a compositional bias: basic and acidic residues; the sequence is RGREQAIRRSEK.

Belongs to the FAM161 family. Interacts (via central region) with CFAP418 (via N-terminus); the interaction is direct. Interacts (via C-terminus) with microtubules. Interacts with LCA5. Interacts with CEP290. Interacts with SDCCAG8. Interacts with FAM161B. Interacts with POC1B. Interacts with CEP78. Forms a microtubule-associated complex with POC5, CETN2 and POC1B. Interacts with CCDC15. In terms of tissue distribution, expressed in the retina.

The protein resides in the cytoplasm. It localises to the cytoskeleton. It is found in the cilium basal body. Its subcellular location is the cell projection. The protein localises to the cilium. The protein resides in the microtubule organizing center. It localises to the centrosome. It is found in the centriole. Its function is as follows. Involved in ciliogenesis. The chain is Protein FAM161A from Mus musculus (Mouse).